The chain runs to 201 residues: Peptidyl-tRNA hydrolase (201 aa).

Tyr15 is a tRNA binding site. The active-site Proton acceptor is His20. Residues Tyr66, Asn68, and Asn114 each contribute to the tRNA site.

The protein belongs to the PTH family. As to quaternary structure, monomer.

Its subcellular location is the cytoplasm. It catalyses the reaction an N-acyl-L-alpha-aminoacyl-tRNA + H2O = an N-acyl-L-amino acid + a tRNA + H(+). Hydrolyzes ribosome-free peptidyl-tRNAs (with 1 or more amino acids incorporated), which drop off the ribosome during protein synthesis, or as a result of ribosome stalling. Its function is as follows. Catalyzes the release of premature peptidyl moieties from peptidyl-tRNA molecules trapped in stalled 50S ribosomal subunits, and thus maintains levels of free tRNAs and 50S ribosomes. In Burkholderia mallei (strain NCTC 10247), this protein is Peptidyl-tRNA hydrolase.